Reading from the N-terminus, the 467-residue chain is Acetyl-CoA decarbonylase/synthase complex subunit beta (467 aa).

The [Ni-Fe-S] cluster site is built by Cys-193, Cys-196, Cys-282, and Cys-284. The disordered stretch occupies residues 403-428 (RWAEEEEEEEEKAPEEEAPAEEPTME). Residues 405–426 (AEEEEEEEEKAPEEEAPAEEPT) are compositionally biased toward acidic residues.

It belongs to the CdhC family. In terms of assembly, monomer. The ACDS complex is made up of alpha, epsilon, beta, gamma and delta chains with a probable stoichiometry of (alpha(2)epsilon(2))(4)-beta(8)-(gamma(1)delta(1))(8). [Ni-Fe-S] cluster is required as a cofactor.

It catalyses the reaction Co(I)-[corrinoid Fe-S protein] + acetyl-CoA + H(+) = methyl-Co(III)-[corrinoid Fe-S protein] + CO + CoA. Functionally, part of a complex that catalyzes the reversible cleavage of acetyl-CoA, allowing autotrophic growth from CO(2). The alpha-epsilon complex generates CO from CO(2), while the beta subunit (this protein) combines the CO with CoA and a methyl group to form acetyl-CoA. The methyl group, which is incorporated into acetyl-CoA, is transferred to the beta subunit by a corrinoid iron-sulfur protein (the gamma-delta complex). This Methanopyrus kandleri (strain AV19 / DSM 6324 / JCM 9639 / NBRC 100938) protein is Acetyl-CoA decarbonylase/synthase complex subunit beta.